Here is a 277-residue protein sequence, read N- to C-terminus: MHFFDRLADRIATADSVVSVGLDPDPARLPDSVLDADLPRWQFNRRIIDATHEHAACYKPNAAFYEDPDGWRALEETIAYAHGKNVPVLLDAKRGDIGNTARQYAQILDEDEGPAADAITVNPFLGRDSLEPFLQRADRGVFVLGRTSNPGGEDLQDLELASGEKLYERVVHLADLWNGNGNVGLVVGATNPDELEEIRELVPDIPFLVPGVGAQGGDAEAAVEHGLADGVGLVNSSRGIIFAGEDAATRRDDSGDAFFKAAGQSAKQLKQRLNQFR.

The Proton donor role is filled by Lys-93.

This sequence belongs to the OMP decarboxylase family. Type 2 subfamily.

The enzyme catalyses orotidine 5'-phosphate + H(+) = UMP + CO2. It functions in the pathway pyrimidine metabolism; UMP biosynthesis via de novo pathway; UMP from orotate: step 2/2. This is Orotidine 5'-phosphate decarboxylase from Haloarcula marismortui (strain ATCC 43049 / DSM 3752 / JCM 8966 / VKM B-1809) (Halobacterium marismortui).